The sequence spans 447 residues: ATP-dependent protease ATPase subunit HslU (447 aa).

ATP-binding positions include Ile17, 59-64, Asp256, Glu321, and Arg393; that span reads GVGKTE.

The protein belongs to the ClpX chaperone family. HslU subfamily. In terms of assembly, a double ring-shaped homohexamer of HslV is capped on each side by a ring-shaped HslU homohexamer. The assembly of the HslU/HslV complex is dependent on binding of ATP.

The protein resides in the cytoplasm. ATPase subunit of a proteasome-like degradation complex; this subunit has chaperone activity. The binding of ATP and its subsequent hydrolysis by HslU are essential for unfolding of protein substrates subsequently hydrolyzed by HslV. HslU recognizes the N-terminal part of its protein substrates and unfolds these before they are guided to HslV for hydrolysis. The protein is ATP-dependent protease ATPase subunit HslU of Pseudomonas entomophila (strain L48).